The primary structure comprises 148 residues: Glutamyl-tRNA(Gln) amidotransferase subunit C, mitochondrial (148 aa).

The transit peptide at 1 to 10 (MLRLLNKRFY) directs the protein to the mitochondrion.

Belongs to the GatC family. As to quaternary structure, subunit of the heterotrimeric GatCAB amidotransferase (AdT) complex, composed of A, B and C subunits.

Its subcellular location is the mitochondrion. The catalysed reaction is L-glutamyl-tRNA(Gln) + L-glutamine + ATP + H2O = L-glutaminyl-tRNA(Gln) + L-glutamate + ADP + phosphate + H(+). Functionally, allows the formation of correctly charged Gln-tRNA(Gln) through the transamidation of misacylated Glu-tRNA(Gln) in the mitochondria. The reaction takes place in the presence of glutamine and ATP through an activated gamma-phospho-Glu-tRNA(Gln). This is Glutamyl-tRNA(Gln) amidotransferase subunit C, mitochondrial from Drosophila ananassae (Fruit fly).